The chain runs to 622 residues: DNA mismatch repair protein MutL (622 aa).

Positions 376 to 401 are disordered; sequence REVREGSSTGRAGNYQPPEPPSREAM.

The protein belongs to the DNA mismatch repair MutL/HexB family.

In terms of biological role, this protein is involved in the repair of mismatches in DNA. It is required for dam-dependent methyl-directed DNA mismatch repair. May act as a 'molecular matchmaker', a protein that promotes the formation of a stable complex between two or more DNA-binding proteins in an ATP-dependent manner without itself being part of a final effector complex. The polypeptide is DNA mismatch repair protein MutL (Aeromonas hydrophila subsp. hydrophila (strain ATCC 7966 / DSM 30187 / BCRC 13018 / CCUG 14551 / JCM 1027 / KCTC 2358 / NCIMB 9240 / NCTC 8049)).